Here is a 613-residue protein sequence, read N- to C-terminus: Dihydroxy-acid dehydratase (613 aa).

Asp-81 serves as a coordination point for Mg(2+). [2Fe-2S] cluster is bound at residue Cys-122. Positions 123 and 124 each coordinate Mg(2+). Lys-124 carries the N6-carboxylysine modification. Residue Cys-195 coordinates [2Fe-2S] cluster. Glu-491 provides a ligand contact to Mg(2+). Ser-517 serves as the catalytic Proton acceptor.

It belongs to the IlvD/Edd family. In terms of assembly, homodimer. It depends on [2Fe-2S] cluster as a cofactor. Requires Mg(2+) as cofactor.

The enzyme catalyses (2R)-2,3-dihydroxy-3-methylbutanoate = 3-methyl-2-oxobutanoate + H2O. The catalysed reaction is (2R,3R)-2,3-dihydroxy-3-methylpentanoate = (S)-3-methyl-2-oxopentanoate + H2O. It participates in amino-acid biosynthesis; L-isoleucine biosynthesis; L-isoleucine from 2-oxobutanoate: step 3/4. The protein operates within amino-acid biosynthesis; L-valine biosynthesis; L-valine from pyruvate: step 3/4. Functions in the biosynthesis of branched-chain amino acids. Catalyzes the dehydration of (2R,3R)-2,3-dihydroxy-3-methylpentanoate (2,3-dihydroxy-3-methylvalerate) into 2-oxo-3-methylpentanoate (2-oxo-3-methylvalerate) and of (2R)-2,3-dihydroxy-3-methylbutanoate (2,3-dihydroxyisovalerate) into 2-oxo-3-methylbutanoate (2-oxoisovalerate), the penultimate precursor to L-isoleucine and L-valine, respectively. This is Dihydroxy-acid dehydratase from Vibrio vulnificus (strain CMCP6).